Here is a 286-residue protein sequence, read N- to C-terminus: CBY1-interacting BAR domain-containing protein 1 (286 aa).

A mitochondrion-targeting transit peptide spans 1 to 47; sequence MLRRNLDERDAQTKQLQDAVTNVEKHFGELCQIFAAYVRKTARLRDK. Positions 10 to 220 are BAR-like; the sequence is DAQTKQLQDA…NIDEDEDLEV (211 aa). A coiled-coil region spans residues 107 to 178; the sequence is KMKRDDLKAT…IDNFEKQKIK (72 aa). The segment at 258–286 is disordered; that stretch reads GQISTCRTRKDQQVEDEDDEELDVTEDEN. Acidic residues predominate over residues 271-286; sequence VEDEDDEELDVTEDEN.

This sequence belongs to the CIBAR family. As to quaternary structure, homodimer (via BAR-like domain). Heterodimer with FAM92B (via BAR-like domains). Interacts (via BAR-like domain) with CBY1; this interaction is required for targeting FAM92A to centriole and cilium basal body. Interacts (via BAR-like domain) with CBY3; both proteins form a ninefold symmetric structure at the flagellar base; are recruited to the annulus in a mutually dependent manner and regulate annulus positionning. Expressed in the heart, liver, spleen, lung, kidney, brain and muscle (at protein level). Strongly expressed throughout the developing limb bud, including the progress zone and the apical ectodermal ridge.

The protein localises to the cytoplasm. It localises to the cytoskeleton. Its subcellular location is the microtubule organizing center. The protein resides in the centrosome. It is found in the centriole. The protein localises to the cilium basal body. It localises to the cell projection. Its subcellular location is the cilium. The protein resides in the nucleus. It is found in the mitochondrion inner membrane. The protein localises to the flagellum. Plays a critical role in regulating mitochondrial ultrastructure and function by maintaining the integrity of mitochondrial morphology, particularly the organization of cristae. Preferentially binds to negatively charged phospholipids like cardiolipin and phosphatidylinositol 4,5-bisphosphate enhancing its interaction with mitochondrial membranes. Induces membrane curvature and tubulation, which are critical for maintaining mitochondrial ultrastructure and the organization of cristae. Plays a crucial role in ciliogenesis. May play a role in limb development through its role in ciliogenesis. Plays a key role in the correct positioning of the annulus, a septin-based ring structure in the sperm flagellum, serving both as a physical barrier and a membrane diffusion barrier that separates the midpiece (MP) from the principal piece (PP). This positioning is essential for proper sperm motility and function. Interacts with CBY3 to form a complex which localizes to the curved membrane region of the flagellar pocket. By doing so, may provide stability and rigidity to the periannular membrane to prevent membrane deformation. This function is crucial for halting annulus migration at the proximal end of the fibrous sheath-containing PP. In Mus musculus (Mouse), this protein is CBY1-interacting BAR domain-containing protein 1.